We begin with the raw amino-acid sequence, 428 residues long: Large envelope protein (428 aa).

The N-myristoyl glycine; by host moiety is linked to residue Gly-2. A pre-S1 region spans residues 2-145 (GNNIKVTFDP…PPLRDTHPHL (144 aa)). Residues 2-204 (GNNIKVTFDP…PLTIGDPVLS (203 aa)) are pre-S. Topologically, residues 2–211 (GNNIKVTFDP…VLSTEMSPSG (210 aa)) are virion surface; in external conformation. Residues 2–283 (GNNIKVTFDP…NGFRWMYLRR (282 aa)) are Intravirion; in internal conformation-facing. Asn-3 is a glycosylation site (N-linked (GlcNAc...) asparagine). The tract at residues 110 to 144 (RDIPRGIVPPQTPSNRDQRRKPTPLTPPLRDTHPH) is disordered. The tract at residues 146–204 (TMKNQTGHLQGFAEGLRALTTSDHHNSAYGDPFTTLSPVVPTVSTTLSPPLTIGDPVLS) is pre-S2. The helical transmembrane segment at 212-232 (LLGLLAGLQVVYFLWTKILTI) threads the bilayer. Residues 233–283 (AQSLDWWWTSLSFPGGIPECTGQNLQFQTCKHLPTSCPPTCNGFRWMYLRR) lie on the Intravirion; in external conformation side of the membrane. Residues 284–304 (FIIYLLVLLLFLTFLLVLLDW) traverse the membrane as a helical segment. Residues 305–376 (KGLLPVCPMM…WALARFSWLS (72 aa)) lie on the Virion surface side of the membrane. The N-linked (GlcNAc...) asparagine; by host glycan is linked to Asn-348. A helical membrane pass occupies residues 377-397 (LLVPLLQWLGGISLTVWLLLI). The Intravirion portion of the chain corresponds to 398–403 (WMIWFW). A helical membrane pass occupies residues 404-426 (GPVLMSILPPFIPIFALFFLIWA). Residues 427–428 (YI) are Virion surface-facing.

It belongs to the orthohepadnavirus major surface antigen family. In terms of assembly, in its internal form (Li-HBsAg), interacts with the capsid protein and with the isoform S. Interacts with host chaperone CANX. Associates with host chaperone CANX through its pre-S2 N glycan; this association may be essential for isoform M proper secretion. As to quaternary structure, interacts with isoform L. Interacts with the antigens of satellite virus HDV (HDVAgs); this interaction is required for encapsidation of HDV genomic RNA. Isoform M is N-terminally acetylated by host at a ratio of 90%, and N-glycosylated by host at the pre-S2 region. In terms of processing, myristoylated.

It is found in the virion membrane. In terms of biological role, the large envelope protein exists in two topological conformations, one which is termed 'external' or Le-HBsAg and the other 'internal' or Li-HBsAg. In its external conformation the protein attaches the virus to cell receptors and thereby initiating infection. This interaction determines the species specificity and liver tropism. This attachment induces virion internalization predominantly through caveolin-mediated endocytosis. The large envelope protein also assures fusion between virion membrane and endosomal membrane. In its internal conformation the protein plays a role in virion morphogenesis and mediates the contact with the nucleocapsid like a matrix protein. Functionally, the middle envelope protein plays an important role in the budding of the virion. It is involved in the induction of budding in a nucleocapsid independent way. In this process the majority of envelope proteins bud to form subviral lipoprotein particles of 22 nm of diameter that do not contain a nucleocapsid. The chain is Large envelope protein from Ground squirrel hepatitis virus (strain 27) (GSHV).